We begin with the raw amino-acid sequence, 294 residues long: Lipoyl synthase (294 aa).

7 residues coordinate [4Fe-4S] cluster: C38, C43, C49, C64, C68, C71, and S277. The 217-residue stretch at 50–266 (WSRGTATFLL…RSFAEGAGFR (217 aa)) folds into the Radical SAM core domain.

It belongs to the radical SAM superfamily. Lipoyl synthase family. [4Fe-4S] cluster serves as cofactor.

The protein resides in the cytoplasm. It catalyses the reaction [[Fe-S] cluster scaffold protein carrying a second [4Fe-4S](2+) cluster] + N(6)-octanoyl-L-lysyl-[protein] + 2 oxidized [2Fe-2S]-[ferredoxin] + 2 S-adenosyl-L-methionine + 4 H(+) = [[Fe-S] cluster scaffold protein] + N(6)-[(R)-dihydrolipoyl]-L-lysyl-[protein] + 4 Fe(3+) + 2 hydrogen sulfide + 2 5'-deoxyadenosine + 2 L-methionine + 2 reduced [2Fe-2S]-[ferredoxin]. It functions in the pathway protein modification; protein lipoylation via endogenous pathway; protein N(6)-(lipoyl)lysine from octanoyl-[acyl-carrier-protein]: step 2/2. Catalyzes the radical-mediated insertion of two sulfur atoms into the C-6 and C-8 positions of the octanoyl moiety bound to the lipoyl domains of lipoate-dependent enzymes, thereby converting the octanoylated domains into lipoylated derivatives. The polypeptide is Lipoyl synthase (Pelodictyon phaeoclathratiforme (strain DSM 5477 / BU-1)).